Consider the following 513-residue polypeptide: Histidine ammonia-lyase (513 aa).

A cross-link (5-imidazolinone (Ala-Gly)) is located at residues 146–148 (ASG). Serine 147 bears the 2,3-didehydroalanine (Ser) mark.

The protein belongs to the PAL/histidase family. In terms of processing, contains an active site 4-methylidene-imidazol-5-one (MIO), which is formed autocatalytically by cyclization and dehydration of residues Ala-Ser-Gly.

The protein resides in the cytoplasm. It catalyses the reaction L-histidine = trans-urocanate + NH4(+). The protein operates within amino-acid degradation; L-histidine degradation into L-glutamate; N-formimidoyl-L-glutamate from L-histidine: step 1/3. This chain is Histidine ammonia-lyase, found in Caulobacter vibrioides (strain NA1000 / CB15N) (Caulobacter crescentus).